Reading from the N-terminus, the 427-residue chain is 4-hydroxy-3-methylbut-2-en-1-yl diphosphate synthase (flavodoxin) (427 aa).

The tract at residues 1-21 (MNKLENTIDSDIAGPAPRHRT) is disordered. [4Fe-4S] cluster is bound by residues cysteine 310, cysteine 313, cysteine 356, and glutamate 363.

Belongs to the IspG family. It depends on [4Fe-4S] cluster as a cofactor.

It catalyses the reaction (2E)-4-hydroxy-3-methylbut-2-enyl diphosphate + oxidized [flavodoxin] + H2O + 2 H(+) = 2-C-methyl-D-erythritol 2,4-cyclic diphosphate + reduced [flavodoxin]. It functions in the pathway isoprenoid biosynthesis; isopentenyl diphosphate biosynthesis via DXP pathway; isopentenyl diphosphate from 1-deoxy-D-xylulose 5-phosphate: step 5/6. In terms of biological role, converts 2C-methyl-D-erythritol 2,4-cyclodiphosphate (ME-2,4cPP) into 1-hydroxy-2-methyl-2-(E)-butenyl 4-diphosphate. The protein is 4-hydroxy-3-methylbut-2-en-1-yl diphosphate synthase (flavodoxin) of Bradyrhizobium diazoefficiens (strain JCM 10833 / BCRC 13528 / IAM 13628 / NBRC 14792 / USDA 110).